The following is a 338-amino-acid chain: Fructose-1,6-bisphosphatase class 1 (338 aa).

4 residues coordinate Mg(2+): Glu-91, Asp-113, Leu-115, and Asp-116. Residues 116–119 (DGSS), Asn-208, and Lys-274 contribute to the substrate site. Glu-280 contributes to the Mg(2+) binding site.

Belongs to the FBPase class 1 family. Homotetramer. Mg(2+) serves as cofactor.

Its subcellular location is the cytoplasm. The enzyme catalyses beta-D-fructose 1,6-bisphosphate + H2O = beta-D-fructose 6-phosphate + phosphate. Its pathway is carbohydrate biosynthesis; gluconeogenesis. This chain is Fructose-1,6-bisphosphatase class 1, found in Ralstonia pickettii (strain 12J).